A 296-amino-acid polypeptide reads, in one-letter code: Coiled-coil domain-containing protein 69 (296 aa).

Residues 1-18 are compositionally biased toward basic residues; it reads MGCRHSRLSSCKPPKKKR. Residues 1–41 are disordered; that stretch reads MGCRHSRLSSCKPPKKKRQEPEPEQPPRPEPHELGPLNGDT. A lipid anchor (N-myristoyl glycine) is attached at glycine 2. The segment covering 19–33 has biased composition (basic and acidic residues); that stretch reads QEPEPEQPPRPEPHE. The stretch at 48–272 forms a coiled coil; that stretch reads CASEEAERHQ…QEKEELLYRV (225 aa). 2 positions are modified to phosphoserine: serine 154 and serine 241.

This sequence belongs to the CCDC69 family. As to expression, highly expressed in duodenum, esophagus, pancreas, prostate, salivary gland, thymus and urinary bladder.

It localises to the cytoplasm. The protein resides in the cytoskeleton. The protein localises to the spindle. Its subcellular location is the midbody. In terms of biological role, may act as a scaffold to regulate the recruitment and assembly of spindle midzone components. Required for the localization of AURKB and PLK1 to the spindle midzone. This is Coiled-coil domain-containing protein 69 from Homo sapiens (Human).